Here is a 217-residue protein sequence, read N- to C-terminus: Uracil-DNA glycosylase (217 aa).

Catalysis depends on aspartate 62, which acts as the Proton acceptor.

Belongs to the uracil-DNA glycosylase (UDG) superfamily. UNG family.

The protein resides in the cytoplasm. It carries out the reaction Hydrolyzes single-stranded DNA or mismatched double-stranded DNA and polynucleotides, releasing free uracil.. Functionally, excises uracil residues from the DNA which can arise as a result of misincorporation of dUMP residues by DNA polymerase or due to deamination of cytosine. The chain is Uracil-DNA glycosylase from Streptococcus pyogenes serotype M49 (strain NZ131).